Consider the following 1168-residue polypeptide: Transcription-repair-coupling factor (1168 aa).

The region spanning D633–I794 is the Helicase ATP-binding domain. G646–T653 lines the ATP pocket. Positions D747 to Q750 match the DEEQ box motif. Positions V808–N969 constitute a Helicase C-terminal domain.

In the N-terminal section; belongs to the UvrB family. It in the C-terminal section; belongs to the helicase family. RecG subfamily.

It localises to the cytoplasm. Functionally, couples transcription and DNA repair by recognizing RNA polymerase (RNAP) stalled at DNA lesions. Mediates ATP-dependent release of RNAP and its truncated transcript from the DNA, and recruitment of nucleotide excision repair machinery to the damaged site. This is Transcription-repair-coupling factor from Staphylococcus aureus (strain MSSA476).